Here is a 118-residue protein sequence, read N- to C-terminus: DNA-binding protein MmarC5_1518 (118 aa).

Residues 1–12 show a composition bias toward basic and acidic residues; sequence MNPEEIRQRRLQ. The disordered stretch occupies residues 1–35; that stretch reads MNPEEIRQRRLQEMQAKAQEQGAEDPEAQRQAQEQ.

It belongs to the PDCD5 family.

The chain is DNA-binding protein MmarC5_1518 from Methanococcus maripaludis (strain C5 / ATCC BAA-1333).